A 124-amino-acid chain; its full sequence is Small ribosomal subunit protein uS12 (124 aa).

At aspartate 90 the chain carries 3-methylthioaspartic acid.

This sequence belongs to the universal ribosomal protein uS12 family. Part of the 30S ribosomal subunit. Contacts proteins S8 and S17. May interact with IF1 in the 30S initiation complex.

With S4 and S5 plays an important role in translational accuracy. Its function is as follows. Interacts with and stabilizes bases of the 16S rRNA that are involved in tRNA selection in the A site and with the mRNA backbone. Located at the interface of the 30S and 50S subunits, it traverses the body of the 30S subunit contacting proteins on the other side and probably holding the rRNA structure together. The combined cluster of proteins S8, S12 and S17 appears to hold together the shoulder and platform of the 30S subunit. This Wolbachia sp. subsp. Brugia malayi (strain TRS) protein is Small ribosomal subunit protein uS12.